A 164-amino-acid chain; its full sequence is Kunitz-type trypsin inhibitor BrTI (164 aa).

This sequence belongs to the leguminous Kunitz-type inhibitor family.

Functionally, inhibitor of trypsin and human plasma kallikrein with a Ki of 2.9 nM and 14.0 nM, respectively. Does not inhibit chymotrypsin, porcine pancreatic elastas, human neutrophil elastase, coagulation factor Xa, human thrombin, porcine pancreatic kallikrein or plasmin. The protein is Kunitz-type trypsin inhibitor BrTI of Bauhinia rufa (Orchid tree).